The primary structure comprises 201 residues: Transgelin (201 aa).

Alanine 2 carries the post-translational modification N-acetylalanine. The Calponin-homology (CH) domain maps to 24–137 (EELEERLVEW…RTLMALGSLA (114 aa)). Serine 166 carries the phosphoserine modification. Lysine 172 is modified (N6-acetyllysine). The Calponin-like repeat unit spans residues 175-200 (IGLQMGSNRGASQAGMTGYGRPRQII). A Phosphoserine modification is found at serine 181. Position 183 is an omega-N-methylarginine (arginine 183).

It belongs to the calponin family.

It localises to the cytoplasm. Actin cross-linking/gelling protein. Involved in calcium interactions and contractile properties of the cell that may contribute to replicative senescence. This is Transgelin (TAGLN) from Homo sapiens (Human).